The primary structure comprises 103 residues: Large ribosomal subunit protein bL21 (103 aa).

The protein belongs to the bacterial ribosomal protein bL21 family. Part of the 50S ribosomal subunit. Contacts protein L20.

In terms of biological role, this protein binds to 23S rRNA in the presence of protein L20. The protein is Large ribosomal subunit protein bL21 of Chromobacterium violaceum (strain ATCC 12472 / DSM 30191 / JCM 1249 / CCUG 213 / NBRC 12614 / NCIMB 9131 / NCTC 9757 / MK).